A 632-amino-acid chain; its full sequence is MAU2 chromatid cohesion factor homolog (632 aa).

TPR repeat units lie at residues Gly453–Glu486 and Ser493–Ile526.

Belongs to the SCC4/mau-2 family. In terms of assembly, interacts with Nipped-B to form the cohesin loading complex.

The protein resides in the nucleus. It localises to the nucleoplasm. Its function is as follows. Required for association of the cohesin complex with chromatin during interphase. Plays a role in sister chromatid cohesion and normal progression through prometaphase. The protein is MAU2 chromatid cohesion factor homolog of Drosophila simulans (Fruit fly).